The primary structure comprises 444 residues: tRNA (guanine-N(7)-)-methyltransferase non-catalytic subunit TRM82 (444 aa).

7 WD repeats span residues 1–47 (MSVI…WSDD), 48–99 (FDKI…LGAP), 100–147 (PIYS…KRFC), 148–192 (FSKR…EPIL), 193–237 (GHVS…DKWL), 238–279 (FGHK…STFD), and 308–354 (FAVS…ITFP). Residues 55–92 (RNTTAKEQQGQSSENENENKKLKSNKGDSIKRTAAKVP) form a disordered region. Positions 71–85 (NENKKLKSNKGDSIK) are enriched in basic and acidic residues. S93 bears the Phosphoserine mark.

Belongs to the WD repeat TRM82 family. As to quaternary structure, forms a heterodimer with the catalytic subunit TRM8.

It localises to the nucleus. Its pathway is tRNA modification; N(7)-methylguanine-tRNA biosynthesis. Required for the formation of N(7)-methylguanine at position 46 (m7G46) in tRNA, a modification required to maintain stability of tRNAs; its absence resulting in tRNA decay. In the complex, it is required to stabilize and induce conformational changes of the catalytic subunit. The chain is tRNA (guanine-N(7)-)-methyltransferase non-catalytic subunit TRM82 from Saccharomyces cerevisiae (strain RM11-1a) (Baker's yeast).